We begin with the raw amino-acid sequence, 130 residues long: Small ribosomal subunit protein uS8 (130 aa).

It belongs to the universal ribosomal protein uS8 family.

The protein is Small ribosomal subunit protein uS8 (RPS22) of Kluyveromyces marxianus (Yeast).